We begin with the raw amino-acid sequence, 239 residues long: Uridylate kinase (239 aa).

Lys-10 to Gly-13 contributes to the ATP binding site. The involved in allosteric activation by GTP stretch occupies residues Gly-18 to Gly-23. Gly-52 contributes to the UMP binding site. Residues Gly-53 and Arg-57 each coordinate ATP. Residues Asp-72 and Thr-133–Thr-140 contribute to the UMP site. Residues Asn-161, Tyr-167, and Glu-170 each contribute to the ATP site.

The protein belongs to the UMP kinase family. Homohexamer.

Its subcellular location is the cytoplasm. It catalyses the reaction UMP + ATP = UDP + ADP. It functions in the pathway pyrimidine metabolism; CTP biosynthesis via de novo pathway; UDP from UMP (UMPK route): step 1/1. Its activity is regulated as follows. Allosterically activated by GTP. Inhibited by UTP. Its function is as follows. Catalyzes the reversible phosphorylation of UMP to UDP. The chain is Uridylate kinase from Halalkalibacterium halodurans (strain ATCC BAA-125 / DSM 18197 / FERM 7344 / JCM 9153 / C-125) (Bacillus halodurans).